The following is a 1358-amino-acid chain: DNA-directed RNA polymerase subunit beta (1358 aa).

Belongs to the RNA polymerase beta chain family. The RNAP catalytic core consists of 2 alpha, 1 beta, 1 beta' and 1 omega subunit. When a sigma factor is associated with the core the holoenzyme is formed, which can initiate transcription.

The catalysed reaction is RNA(n) + a ribonucleoside 5'-triphosphate = RNA(n+1) + diphosphate. Its function is as follows. DNA-dependent RNA polymerase catalyzes the transcription of DNA into RNA using the four ribonucleoside triphosphates as substrates. The polypeptide is DNA-directed RNA polymerase subunit beta (Azotobacter vinelandii (strain DJ / ATCC BAA-1303)).